The sequence spans 252 residues: Chitooligosaccharide deacetylase (252 aa).

Mg(2+) is bound by residues histidine 61 and histidine 125.

It belongs to the YdjC deacetylase family. ChbG subfamily. As to quaternary structure, homodimer. Mg(2+) serves as cofactor.

The protein resides in the cytoplasm. It catalyses the reaction N,N'-diacetylchitobiose + H2O = N-acetyl-beta-D-glucosaminyl-(1-&gt;4)-D-glucosamine + acetate. The catalysed reaction is diacetylchitobiose-6'-phosphate + H2O = N'-monoacetylchitobiose-6'-phosphate + acetate. It functions in the pathway glycan degradation; chitin degradation. In terms of biological role, involved in the degradation of chitin. ChbG is essential for growth on the acetylated chitooligosaccharides chitobiose and chitotriose but is dispensable for growth on cellobiose and chitosan dimer, the deacetylated form of chitobiose. Deacetylation of chitobiose-6-P and chitotriose-6-P is necessary for both the activation of the chb promoter by the regulatory protein ChbR and the hydrolysis of phosphorylated beta-glucosides by the phospho-beta-glucosidase ChbF. Catalyzes the removal of only one acetyl group from chitobiose-6-P to yield monoacetylchitobiose-6-P, the inducer of ChbR and the substrate of ChbF. The sequence is that of Chitooligosaccharide deacetylase from Escherichia coli (strain 55989 / EAEC).